We begin with the raw amino-acid sequence, 60 residues long: Ras-related protein Rab-2A (60 aa).

GTP is bound by residues Ser1, Cys2, and Thr19. Ser1 serves as a coordination point for Mg(2+). The short motif at His16–Phe24 is the Effector region element. Thr19 contributes to the Mg(2+) binding site.

Belongs to the small GTPase superfamily. Rab family. Interacts with PRKCI. Interacts with TRIP11. Interacts (in GTP-bound form) with GARIN1B. Interacts (GTP-bound) with HOPS complex component VPS39; interaction contributes to obtaining a functional HOPS complex that promotes autophagosome-lysosome membrane fusion driven by STX17-SNAP29-VAMP8. May interact with VPS41. Requires Mg(2+) as cofactor. In terms of processing, prenylated. Prenylation is required for association with cellular membranes.

The protein resides in the endoplasmic reticulum-Golgi intermediate compartment membrane. It localises to the melanosome. The protein localises to the endoplasmic reticulum membrane. It is found in the golgi apparatus membrane. Its subcellular location is the cytoplasmic vesicle. The protein resides in the secretory vesicle. It localises to the acrosome. The protein localises to the autophagosome membrane. It catalyses the reaction GTP + H2O = GDP + phosphate + H(+). Its activity is regulated as follows. Regulated by guanine nucleotide exchange factors (GEFs) which promote the exchange of bound GDP for free GTP, GTPase activating proteins (GAPs) which increase the GTP hydrolysis activity, and GDP dissociation inhibitors (GDIs) which inhibit the dissociation of the nucleotide from the GTPase. Functionally, the small GTPases Rab are key regulators of intracellular membrane trafficking, from the formation of transport vesicles to their fusion with membranes. Rabs cycle between active GTP-bound and inactive GDP-bound states. In their active state, drive transport of vesicular carriers from donor organelles to acceptor organelles to regulate the membrane traffic that maintains organelle identity and morphology. RAB2A regulates autophagy by promoting autophagosome-lysosome fusion via recruitment of the HOPS endosomal tethering complex; this process involves autophagosomal RAB2A and lysosomal RAB39A recruitment of HOPS subcomplexes VPS39-VPS11 and VPS41-VPS16-VPS18-VPS33A, respectively, which assemble into a functional complex to mediate membrane tethering and SNAREs-driven membrane fusion. Required for protein transport from the endoplasmic reticulum to the Golgi complex. Regulates the compacted morphology of the Golgi. Together with RAB2B, redundantly required for efficient autophagic flux. The polypeptide is Ras-related protein Rab-2A (Mesocricetus auratus (Golden hamster)).